A 311-amino-acid polypeptide reads, in one-letter code: Ribosomal protein L11 methyltransferase (311 aa).

Positions 163, 184, 206, and 248 each coordinate S-adenosyl-L-methionine.

It belongs to the methyltransferase superfamily. PrmA family.

Its subcellular location is the cytoplasm. It carries out the reaction L-lysyl-[protein] + 3 S-adenosyl-L-methionine = N(6),N(6),N(6)-trimethyl-L-lysyl-[protein] + 3 S-adenosyl-L-homocysteine + 3 H(+). In terms of biological role, methylates ribosomal protein L11. The chain is Ribosomal protein L11 methyltransferase from Clostridium acetobutylicum (strain ATCC 824 / DSM 792 / JCM 1419 / IAM 19013 / LMG 5710 / NBRC 13948 / NRRL B-527 / VKM B-1787 / 2291 / W).